A 529-amino-acid polypeptide reads, in one-letter code: Inosine-5'-monophosphate dehydrogenase (529 aa).

CBS domains are found at residues 129–185 (MVTD…SKQV) and 189–246 (MTKA…PLAT). NAD(+) contacts are provided by residues D283 and 334 to 336 (GVG). K(+)-binding residues include G336 and G338. IMP is bound at residue S339. K(+) is bound at residue C341. C341 serves as the catalytic Thioimidate intermediate. Residues 374 to 376 (DGG), 397 to 398 (GS), and 421 to 425 (YRGMG) contribute to the IMP site. The Proton acceptor role is filled by R443. Residue E458 coordinates IMP. Residues E511, S512, and H513 each coordinate K(+).

This sequence belongs to the IMPDH/GMPR family. As to quaternary structure, homotetramer. K(+) is required as a cofactor.

It catalyses the reaction IMP + NAD(+) + H2O = XMP + NADH + H(+). It participates in purine metabolism; XMP biosynthesis via de novo pathway; XMP from IMP: step 1/1. With respect to regulation, mycophenolic acid (MPA) is a non-competitive inhibitor that prevents formation of the closed enzyme conformation by binding to the same site as the amobile flap. In contrast, mizoribine monophosphate (MZP) is a competitive inhibitor that induces the closed conformation. MPA is a potent inhibitor of mammalian IMPDHs but a poor inhibitor of the bacterial enzymes. MZP is a more potent inhibitor of bacterial IMPDH. Functionally, catalyzes the conversion of inosine 5'-phosphate (IMP) to xanthosine 5'-phosphate (XMP), the first committed and rate-limiting step in the de novo synthesis of guanine nucleotides, and therefore plays an important role in the regulation of cell growth. The polypeptide is Inosine-5'-monophosphate dehydrogenase (Mycobacterium bovis (strain ATCC BAA-935 / AF2122/97)).